The chain runs to 498 residues: uncharacterized protein (498 aa).

This is an uncharacterized protein from Acanthamoeba polyphaga (Amoeba).